The primary structure comprises 241 residues: Pyridoxal phosphate phosphatase PHOSPHO2 (241 aa).

Catalysis depends on aspartate 8, which acts as the Nucleophile. Residues aspartate 8 and aspartate 10 each coordinate Mg(2+). The active-site Proton donor is the aspartate 10. Aspartate 19 and aspartate 99 together coordinate substrate. Aspartate 179 contacts Mg(2+).

Belongs to the HAD-like hydrolase superfamily. PHOSPHO family. Mg(2+) is required as a cofactor.

The enzyme catalyses pyridoxal 5'-phosphate + H2O = pyridoxal + phosphate. Phosphatase that has high activity toward pyridoxal 5'-phosphate (PLP). Also active at much lower level toward pyrophosphate, phosphoethanolamine (PEA), phosphocholine (PCho), phospho-l-tyrosine, fructose-6-phosphate, p-nitrophenyl phosphate, and h-glycerophosphate. The polypeptide is Pyridoxal phosphate phosphatase PHOSPHO2 (Phospho2) (Rattus norvegicus (Rat)).